The primary structure comprises 682 residues: ATP-dependent zinc metalloprotease FtsH (682 aa).

Residues 1-7 lie on the Cytoplasmic side of the membrane; it reads MKQSHKT. The chain crosses the membrane as a helical span at residues 8 to 28; the sequence is ILLWALLIFLFVMIYNLISDG. Topologically, residues 29-138 are periplasmic; it reads TSGEETLDTT…YEVKAKEEST (110 aa). A helical membrane pass occupies residues 139–159; that stretch reads FWQSLLISWLPMLLLFALFFF. Residues 160-682 are Cytoplasmic-facing; it reads FMRQLQAGGG…SGTDPEPEPA (523 aa). 232 to 239 lines the ATP pocket; sequence GPPGTGKT. H454 lines the Zn(2+) pocket. E455 is an active-site residue. Zn(2+)-binding residues include H458 and D531. Positions 638–682 are disordered; sequence LSRPAVVSKPSADAESSVDEDEREARPALFPPLGKSGTDPEPEPA.

This sequence in the central section; belongs to the AAA ATPase family. In the C-terminal section; belongs to the peptidase M41 family. As to quaternary structure, homohexamer. Zn(2+) serves as cofactor.

The protein resides in the cell inner membrane. Acts as a processive, ATP-dependent zinc metallopeptidase for both cytoplasmic and membrane proteins. Plays a role in the quality control of integral membrane proteins. The protein is ATP-dependent zinc metalloprotease FtsH of Haliangium ochraceum (strain DSM 14365 / JCM 11303 / SMP-2).